Consider the following 647-residue polypeptide: CRE-binding bZIP protein SKO1 (647 aa).

Disordered regions lie at residues 1-119 (MSSE…GSKR), 135-204 (STTN…QMPG), 305-331 (TPTT…TSTK), and 353-429 (KENE…EEQE). A compositionally biased stretch (polar residues) spans 51 to 85 (RNNSTSTITQHSQRSTHSLNSIPEENGNSTVTDNS). At Ser-94 the chain carries Phosphoserine. Thr-113 is modified (phosphothreonine). Composition is skewed to low complexity over residues 138–194 (NPSQ…SGNG) and 305–329 (TPTT…PNTS). Composition is skewed to polar residues over residues 357–368 (NLTTQIENNDQF) and 396–405 (RKNSAVTTAP). A Phosphoserine modification is found at Ser-399. The bZIP domain occupies 429-492 (ERKRKEFLER…PSSSSNSQFN (64 aa)). Residues 430–451 (RKRKEFLERNRVAASKFRKRKK) are basic motif. The interval 454-461 (IKKIENDL) is leucine-zipper. Ser-558 carries the post-translational modification Phosphoserine.

The protein belongs to the bZIP family.

It is found in the nucleus. Its function is as follows. Binds to the CRE motif 5'-TGACGTCA-3' and acts as a repressor of transcription of the SUC2 gene and most probably other genes. This Saccharomyces cerevisiae (strain ATCC 204508 / S288c) (Baker's yeast) protein is CRE-binding bZIP protein SKO1 (SKO1).